Here is a 182-residue protein sequence, read N- to C-terminus: Glycerol-3-phosphate acyltransferase 1 (182 aa).

The next 5 helical transmembrane spans lie at 5–25, 54–74, 81–101, 117–137, and 157–177; these read MQFL…AYIV, GYFV…VSIA, STFL…PILF, IAFD…FYLI, and ILYS…VLIL.

The protein belongs to the PlsY family. As to quaternary structure, probably interacts with PlsX.

The protein resides in the cell membrane. It catalyses the reaction an acyl phosphate + sn-glycerol 3-phosphate = a 1-acyl-sn-glycero-3-phosphate + phosphate. It functions in the pathway lipid metabolism; phospholipid metabolism. Functionally, catalyzes the transfer of an acyl group from acyl-phosphate (acyl-PO(4)) to glycerol-3-phosphate (G3P) to form lysophosphatidic acid (LPA). This enzyme utilizes acyl-phosphate as fatty acyl donor, but not acyl-CoA or acyl-ACP. The polypeptide is Glycerol-3-phosphate acyltransferase 1 (Bacillus thuringiensis subsp. konkukian (strain 97-27)).